A 277-amino-acid polypeptide reads, in one-letter code: Ethanolamine ammonia-lyase small subunit (277 aa).

The adenosylcob(III)alamin site is built by V164, E185, and C214.

The protein belongs to the EutC family. In terms of assembly, the basic unit is a heterodimer which dimerizes to form tetramers. The heterotetramers trimerize; 6 large subunits form a core ring with 6 small subunits projecting outwards. It depends on adenosylcob(III)alamin as a cofactor.

It localises to the bacterial microcompartment. The enzyme catalyses ethanolamine = acetaldehyde + NH4(+). The protein operates within amine and polyamine degradation; ethanolamine degradation. In terms of biological role, catalyzes the deamination of various vicinal amino-alcohols to oxo compounds. Allows this organism to utilize ethanolamine as the sole source of nitrogen and carbon in the presence of external vitamin B12. This is Ethanolamine ammonia-lyase small subunit from Pseudomonas fluorescens (strain SBW25).